Here is a 111-residue protein sequence, read N- to C-terminus: Large ribosomal subunit protein uL22 (111 aa).

It belongs to the universal ribosomal protein uL22 family. Part of the 50S ribosomal subunit.

This protein binds specifically to 23S rRNA; its binding is stimulated by other ribosomal proteins, e.g. L4, L17, and L20. It is important during the early stages of 50S assembly. It makes multiple contacts with different domains of the 23S rRNA in the assembled 50S subunit and ribosome. In terms of biological role, the globular domain of the protein is located near the polypeptide exit tunnel on the outside of the subunit, while an extended beta-hairpin is found that lines the wall of the exit tunnel in the center of the 70S ribosome. The polypeptide is Large ribosomal subunit protein uL22 (Mycoplasma mycoides subsp. mycoides SC (strain CCUG 32753 / NCTC 10114 / PG1)).